Here is a 708-residue protein sequence, read N- to C-terminus: Nicastrin (708 aa).

Residues 1 to 34 (MATARGGSGPDPGSRGLLLLSFSVVLAGLCGGNS) form the signal peptide. Topologically, residues 35–668 (VERKIYIPLN…IFLIASKELE (634 aa)) are lumenal. N-linked (GlcNAc...) asparagine glycans are attached at residues Asn-44, Asn-54, and Asn-128. A disulfide bridge links Cys-49 with Cys-61. An intrachain disulfide couples Cys-139 to Cys-158. 2 N-linked (GlcNAc...) asparagine glycosylation sites follow: Asn-186 and Asn-203. 2 disulfides stabilise this stretch: Cys-194–Cys-212 and Cys-229–Cys-247. N-linked (GlcNAc...) asparagine glycans are attached at residues Asn-263, Asn-386, Asn-434, Asn-463, Asn-507, Asn-529, Asn-561, Asn-572, Asn-579, Asn-593, and Asn-611. Cys-585 and Cys-619 form a disulfide bridge. Residues 669–689 (FITLIVGFSILVFSLIVTYCI) traverse the membrane as a helical segment. The Cytoplasmic segment spans residues 690-708 (NAKADVLFVAPREPGAVSY).

Belongs to the nicastrin family. Component of the gamma-secretase complex. The functional gamma-secretase complex is composed of at least four polypeptides: a presenilin homodimer (PSEN1 or PSEN2), nicastrin (NCSTN), APH1 (APH1A or APH1B) and PEN2. Binds to proteolytic processed C-terminal fragments C83 and C99 of the amyloid precursor protein (APP). Interacts with PSEN1 and PSEN2. In terms of processing, N-glycosylated.

It is found in the membrane. It localises to the cytoplasmic vesicle membrane. Its subcellular location is the melanosome. In terms of biological role, essential subunit of the gamma-secretase complex, an endoprotease complex that catalyzes the intramembrane cleavage of integral membrane proteins such as Notch receptors and APP (amyloid-beta precursor protein). The gamma-secretase complex plays a role in Notch and Wnt signaling cascades and regulation of downstream processes via its role in processing key regulatory proteins, and by regulating cytosolic CTNNB1 levels. The chain is Nicastrin (Ncstn) from Rattus norvegicus (Rat).